We begin with the raw amino-acid sequence, 238 residues long: Oxidoreductase dmxR7 (238 aa).

The protein belongs to the avfA family.

It functions in the pathway secondary metabolite biosynthesis. Its function is as follows. Oxidoreductase; part of the gene cluster that mediates the biosynthesis of the dimeric xanthones cryptosporioptides. The pathway begins with the synthesis of atrochrysone thioester by the polyketide synthase dmx-nrPKS. The atrochrysone carboxyl ACP thioesterase dmxR1 then breaks the thioester bond and releases the atrochrysone carboxylic acid from dmx-nrPKS. Atrochrysone carboxylic acid is decarboxylated by the decarboxylase dmxR15, and oxidized by the anthrone oxygenase dmxR16 to yield emodin. Emodin is then reduced to emodin hydroquinone by the oxidoreductase dmxR7. A-ring reduction by the short chain dehydrogenase dmxR18, dehydration by the scytalone dehydratase-like protein dmxR17 and probable spontaneous re-oxidation, results in overall deoxygenation to chrysophanol. Baeyer-Villiger oxidation by the Baeyer-Villiger monooxygenase (BVMO) dmxR6 then yields monodictylactone in equilibrium with monodictyphenone. In the case of the cryptosporioptides biosynthesis, monodictylactone is reduced at C-12 to an alcohol (by the short chain dehydrogenases dmxR12 or dmxR8) and hydroxylated at C-5 by dmxR9, yielding the electron-rich aromatic which could eliminate H(2)O to form the ortho-quinonemethide, followed by tautomerisation to paraquinone and complete the formal reduction to produce the 10-methylgroup. Conjugate addition of C-4a-OH to the resulting paraquinone by the monooxygenase dmxR10 then gives cyclohexadienone, which is then reduced at C-5 by the short chain dehydrogenase dmxR3 to give the dihydroxanthone. The 6,7-epoxide in the cryptosporioptides could be introduced by the cytochrome P450 monooxygenase dmxL3. The highly reducing PKS dmxL2 manufactures butyrate, which is further carboxylated by dmxL1 to form ethylmalonate. It is not yet clear whether the carboxylation occurs while the butyrate is attached to the ACP of dmxL2, but this unusual fungal metabolite could then be esterified to O-5 by the O-acetyltransferase dmxR13. Finally, dimerization performed by dmxR5 gives the observed dimers cryptosporioptides A, B and C as the final products of the pathway. In Cryptosporiopsis sp. (strain 8999), this protein is Oxidoreductase dmxR7.